Consider the following 277-residue polypeptide: Sulfur carrier protein FdhD (277 aa).

The Cysteine persulfide intermediate role is filled by cysteine 123. Residue 263–268 (FVRGNK) participates in Mo-bis(molybdopterin guanine dinucleotide) binding.

It belongs to the FdhD family.

The protein localises to the cytoplasm. In terms of biological role, required for formate dehydrogenase (FDH) activity. Acts as a sulfur carrier protein that transfers sulfur from IscS to the molybdenum cofactor prior to its insertion into FDH. In Corynebacterium efficiens (strain DSM 44549 / YS-314 / AJ 12310 / JCM 11189 / NBRC 100395), this protein is Sulfur carrier protein FdhD.